A 175-amino-acid polypeptide reads, in one-letter code: Crossover junction endodeoxyribonuclease RuvC (175 aa).

Residues Asp16, Glu76, and Asp148 contribute to the active site. Positions 16, 76, and 148 each coordinate Mg(2+).

Belongs to the RuvC family. As to quaternary structure, homodimer which binds Holliday junction (HJ) DNA. The HJ becomes 2-fold symmetrical on binding to RuvC with unstacked arms; it has a different conformation from HJ DNA in complex with RuvA. In the full resolvosome a probable DNA-RuvA(4)-RuvB(12)-RuvC(2) complex forms which resolves the HJ. Requires Mg(2+) as cofactor.

It is found in the cytoplasm. It carries out the reaction Endonucleolytic cleavage at a junction such as a reciprocal single-stranded crossover between two homologous DNA duplexes (Holliday junction).. In terms of biological role, the RuvA-RuvB-RuvC complex processes Holliday junction (HJ) DNA during genetic recombination and DNA repair. Endonuclease that resolves HJ intermediates. Cleaves cruciform DNA by making single-stranded nicks across the HJ at symmetrical positions within the homologous arms, yielding a 5'-phosphate and a 3'-hydroxyl group; requires a central core of homology in the junction. The consensus cleavage sequence is 5'-(A/T)TT(C/G)-3'. Cleavage occurs on the 3'-side of the TT dinucleotide at the point of strand exchange. HJ branch migration catalyzed by RuvA-RuvB allows RuvC to scan DNA until it finds its consensus sequence, where it cleaves and resolves the cruciform DNA. This is Crossover junction endodeoxyribonuclease RuvC from Bradyrhizobium sp. (strain BTAi1 / ATCC BAA-1182).